The following is a 264-amino-acid chain: tRNA (guanine-N(1)-)-methyltransferase (264 aa).

S-adenosyl-L-methionine is bound by residues glycine 125 and 145–150 (LGDFVL).

This sequence belongs to the RNA methyltransferase TrmD family. In terms of assembly, homodimer.

Its subcellular location is the cytoplasm. The catalysed reaction is guanosine(37) in tRNA + S-adenosyl-L-methionine = N(1)-methylguanosine(37) in tRNA + S-adenosyl-L-homocysteine + H(+). Functionally, specifically methylates guanosine-37 in various tRNAs. This is tRNA (guanine-N(1)-)-methyltransferase from Burkholderia multivorans (strain ATCC 17616 / 249).